A 263-amino-acid chain; its full sequence is Sepiapterin reductase (263 aa).

Residues 18–24 (GASRGFG), 46–47 (RT), and 73–74 (DL) each bind NADP(+). Residues 160–161 (SL) and Y173 contribute to the substrate site. An NADP(+)-binding site is contributed by K177. G202 provides a ligand contact to substrate. Residue 204–209 (LDTDMH) participates in NADP(+) binding. Substrate is bound at residue D260.

Belongs to the sepiapterin reductase family. In terms of assembly, homodimer.

It is found in the cytoplasm. It carries out the reaction L-erythro-7,8-dihydrobiopterin + NADP(+) = L-sepiapterin + NADPH + H(+). The catalysed reaction is (6R)-L-erythro-5,6,7,8-tetrahydrobiopterin + 2 NADP(+) = 6-pyruvoyl-5,6,7,8-tetrahydropterin + 2 NADPH + 2 H(+). In terms of biological role, catalyzes the final one or two reductions in tetra-hydrobiopterin biosynthesis to form 5,6,7,8-tetrahydrobiopterin. The sequence is that of Sepiapterin reductase (spr) from Xenopus laevis (African clawed frog).